Reading from the N-terminus, the 274-residue chain is MDRPGFVAALVAGGVAGVSVDLILFPLDTIKTRLQSPQGFSKAGGFHGIYAGVPSAAIGSFPNAAAFFITYEYVKWFLHADSSSYLTPMKHMLAASAGEVVACLIRVPSEVVKQRAQVSASTRTFQIFSNILYEEGIQGLYRGYKSTVLREIPFSLVQFPLWESLKALWSWRQDHVVDSWQSAVCGAFAGGFAAAVTTPLDVAKTRITLAKAGSSTADGNVLSVLHGVWRSQGLAGLFAGVFPRMAAISLGGFIFLGAYDRTHSLLLEVGRKSP.

3 Solcar repeats span residues 4–77 (PGFV…VKWF), 86–168 (LTPM…LKAL), and 177–265 (VDSW…THSL). 6 consecutive transmembrane segments (helical) span residues 5 to 25 (GFVA…LILF), 49 to 69 (IYAG…AFFI), 85 to 105 (YLTP…ACLI), 142 to 162 (RGYK…FPLW), 182 to 202 (SAVC…PLDV), and 238 to 258 (FAGV…FLGA).

This sequence belongs to the mitochondrial carrier (TC 2.A.29) family. In terms of tissue distribution, widely expressed. Highly expressed in testis, with moderate expression in brain, heart, kidney, lung, skeletal muscle, pancreas, small intestine and liver, and low expression in spleen.

It is found in the mitochondrion inner membrane. The enzyme catalyses S-adenosyl-L-homocysteine(out) + S-adenosyl-L-methionine(in) = S-adenosyl-L-homocysteine(in) + S-adenosyl-L-methionine(out). Its activity is regulated as follows. Strongly inhibited by tannic acid and Bromocresol Purple. Mitochondrial S-adenosyl-L-methionine/S-adenosyl-L-homocysteine antiporter. Mediates the exchange of cytosolic S-adenosyl-L-methionine, the predominant methyl-group donor for macromolecule methylation processes, for mitochondrial S-adenosylhomocysteine(SAH), a by-product of methylation reactions. The polypeptide is Mitochondrial S-adenosylmethionine carrier protein (Homo sapiens (Human)).